The following is a 509-amino-acid chain: ATP synthase subunit alpha (509 aa).

169 to 176 (GDRQTGKT) lines the ATP pocket.

This sequence belongs to the ATPase alpha/beta chains family. F-type ATPases have 2 components, CF(1) - the catalytic core - and CF(0) - the membrane proton channel. CF(1) has five subunits: alpha(3), beta(3), gamma(1), delta(1), epsilon(1). CF(0) has three main subunits: a(1), b(2) and c(9-12). The alpha and beta chains form an alternating ring which encloses part of the gamma chain. CF(1) is attached to CF(0) by a central stalk formed by the gamma and epsilon chains, while a peripheral stalk is formed by the delta and b chains.

The protein resides in the cell inner membrane. The catalysed reaction is ATP + H2O + 4 H(+)(in) = ADP + phosphate + 5 H(+)(out). In terms of biological role, produces ATP from ADP in the presence of a proton gradient across the membrane. The alpha chain is a regulatory subunit. The protein is ATP synthase subunit alpha of Brucella suis biovar 1 (strain 1330).